Consider the following 134-residue polypeptide: Transcriptional activator protein (134 aa).

The short motif at 17–31 (KVQHRIAKKTTRRRR) is the Nuclear localization signal element. The segment at 36-53 (CGCSYFVALGCHNHGFTH) is a zinc-finger region. The interval 73 to 103 (KSPVFQDNQTPRETISEEPRHNHNTSPIQLQ) is disordered. Over residues 75-85 (PVFQDNQTPRE) the composition is skewed to polar residues. Residues 119 to 134 (NLDSFTSSDLAFLKSI) are transactivation.

This sequence belongs to the geminiviridae transcriptional activator protein family. Monomer. Homodimer. Homooligomer. Self-interaction correlates with nuclear localization and efficient activation of transcription. Monomers suppress local silencing by interacting with and inactivating host adenosine kinase 2 (ADK2) in the cytoplasm. Interacts with and inhibits host SNF1 kinase. Binds to ssDNA. May interact with host RPS27A. In terms of processing, phosphorylated.

The protein localises to the host nucleus. It is found in the host cytoplasm. Multifunctional protein that modulates host antiviral defenses and promotes host attractiveness to insect vectors. Acts as a suppressor of RNA-mediated gene silencing, also known as post-transcriptional gene silencing (PTGS), a mechanism of plant viral defense that limits the accumulation of viral RNAs. TrAP suppresses the host RNA silencing by inhibiting adenosine kinase 2 (ADK2), a kinase involved in a general methylation pathway. Also suppresses the host basal defense by interacting with and inhibiting SNF1 kinase, a key regulator of cell metabolism implicated in innate antiviral defense. In terms of biological role, inhibits signal transduction by the phytohormone jasmonate, making the infected plant more attractive to aphids, which are the second host to play a role as a dissemination vector. Acts by binding to ubiquitin precursor RPS27A, thereby preventing ubiquitin degradation of JAZ. This Tomato yellow leaf curl China virus (TYLCCNV) protein is Transcriptional activator protein.